The following is a 424-amino-acid chain: Glutamyl-tRNA(Gln) amidotransferase subunit D (424 aa).

The interval 56–78 (GETANGSRNGGKGCKTNEEELPE) is disordered. The Asparaginase/glutaminase domain maps to 84 to 413 (PKIAILSTGG…EKAAGMLRED (330 aa)). Active-site residues include Thr94, Thr170, Asp171, and Lys247.

The protein belongs to the asparaginase 1 family. GatD subfamily. In terms of assembly, heterodimer of GatD and GatE.

The enzyme catalyses L-glutamyl-tRNA(Gln) + L-glutamine + ATP + H2O = L-glutaminyl-tRNA(Gln) + L-glutamate + ADP + phosphate + H(+). Allows the formation of correctly charged Gln-tRNA(Gln) through the transamidation of misacylated Glu-tRNA(Gln) in organisms which lack glutaminyl-tRNA synthetase. The reaction takes place in the presence of glutamine and ATP through an activated gamma-phospho-Glu-tRNA(Gln). The GatDE system is specific for glutamate and does not act on aspartate. This chain is Glutamyl-tRNA(Gln) amidotransferase subunit D, found in Methanosarcina acetivorans (strain ATCC 35395 / DSM 2834 / JCM 12185 / C2A).